Reading from the N-terminus, the 343-residue chain is Anthranilate 1,2-dioxygenase electron transfer component (343 aa).

Residues H3–S96 form the 2Fe-2S ferredoxin-type domain. [2Fe-2S] cluster-binding residues include C40, C45, C48, and C80. The segment at I98 to S338 is ferredoxin-reductase. The FAD-binding FR-type domain maps to E103 to R206.

It belongs to the bacterial ring-hydroxylating dioxygenase ferredoxin reductase family. As to quaternary structure, monomer. It is part of the anthranilate dioxygenase two component enzyme system. The other component is an oxygenase component consisting of 3 large (AntA) and 3 small (AntB) subunits. The cofactor is FAD. [2Fe-2S] cluster is required as a cofactor.

It catalyses the reaction 2 reduced [2Fe-2S]-[ferredoxin] + NAD(+) + H(+) = 2 oxidized [2Fe-2S]-[ferredoxin] + NADH. Its pathway is aromatic compound metabolism; anthranilate degradation via hydroxylation; catechol from anthranilate: step 1/1. Functionally, electron transfer component of anthranilate 1,2-dioxygenase system. In Acinetobacter baylyi (strain ATCC 33305 / BD413 / ADP1), this protein is Anthranilate 1,2-dioxygenase electron transfer component.